We begin with the raw amino-acid sequence, 278 residues long: Protein mtd-1 (278 aa).

A signal peptide spans 1–17 (MRSSLLLLVFFLSIGWA). Residues 18 to 254 (RYCVHNEKSW…EMLEEIEARK (237 aa)) lie on the Extracellular side of the membrane. 4 N-linked (GlcNAc...) asparagine glycosylation sites follow: asparagine 40, asparagine 73, asparagine 163, and asparagine 190. The chain crosses the membrane as a helical span at residues 255–271 (VPVDSSAPVNIILSIAF). Topologically, residues 272 to 278 (SIFLIHF) are cytoplasmic.

Its subcellular location is the cell membrane. Functionally, plays a role in mechanosensory transduction (touch sensitivity). The protein is Protein mtd-1 of Caenorhabditis elegans.